A 56-amino-acid chain; its full sequence is Large ribosomal subunit protein bL33 (56 aa).

It belongs to the bacterial ribosomal protein bL33 family.

In Actinobacillus succinogenes (strain ATCC 55618 / DSM 22257 / CCUG 43843 / 130Z), this protein is Large ribosomal subunit protein bL33.